The following is a 243-amino-acid chain: 7-cyano-7-deazaguanine synthase (243 aa).

Residue F18–L28 participates in ATP binding. Zn(2+)-binding residues include C206, C221, C224, and C227.

It belongs to the QueC family. Zn(2+) serves as cofactor.

The catalysed reaction is 7-carboxy-7-deazaguanine + NH4(+) + ATP = 7-cyano-7-deazaguanine + ADP + phosphate + H2O + H(+). The protein operates within purine metabolism; 7-cyano-7-deazaguanine biosynthesis. Functionally, catalyzes the ATP-dependent conversion of 7-carboxy-7-deazaguanine (CDG) to 7-cyano-7-deazaguanine (preQ(0)). This Maricaulis maris (strain MCS10) (Caulobacter maris) protein is 7-cyano-7-deazaguanine synthase.